Here is a 209-residue protein sequence, read N- to C-terminus: Small ribosomal subunit protein uS4 (209 aa).

The segment at 22–45 (RGRNPLLRKPNPPGQHGMQRKKKS) is disordered. One can recognise an S4 RNA-binding domain in the interval 93–154 (CRLDNIVYRL…KSKRLAIVTE (62 aa)).

Belongs to the universal ribosomal protein uS4 family. As to quaternary structure, part of the 30S ribosomal subunit. Contacts protein S5. The interaction surface between S4 and S5 is involved in control of translational fidelity.

In terms of biological role, one of the primary rRNA binding proteins, it binds directly to 16S rRNA where it nucleates assembly of the body of the 30S subunit. Functionally, with S5 and S12 plays an important role in translational accuracy. The polypeptide is Small ribosomal subunit protein uS4 (Chlamydia trachomatis serovar A (strain ATCC VR-571B / DSM 19440 / HAR-13)).